A 195-amino-acid chain; its full sequence is Calcineurin B homologous protein 1 (195 aa).

Glycine 2 carries the N-myristoyl glycine lipid modification. The short motif at 2-6 is the Necessary for association with microtubule and interaction with GAPDH element; sequence GSRAS. 4 consecutive EF-hand domains span residues 26-61, 66-101, 110-145, and 151-186; these read SQIT…AINP, IINA…KSKD, SRSN…MVGV, and QLGS…VDVE. Residues aspartate 123, aspartate 125, aspartate 127, lysine 129, and glutamate 134 each contribute to the Ca(2+) site. A Nuclear export signal 1 motif is present at residues 138–147; it reads VLRMMVGVNI. The interval 143-185 is necessary for nuclear export signal; it reads VGVNISDEQLGSIADRTIQEADQDGDSAISFTEFVKVLEKVDV. Residues aspartate 164, aspartate 166, aspartate 168, and glutamate 175 each contribute to the Ca(2+) site. Residues 176–185 carry the Nuclear export signal 2 motif; it reads FVKVLEKVDV.

The protein belongs to the calcineurin regulatory subunit family. CHP subfamily. Monomer. Interacts with STK17B; the interaction occurs in a calcium-independent manner and induces the translocation of CHP1 from the Golgi to the nucleus. Interacts with GAPDH; the interaction is direct, occurs in a N-myristoylation-dependent manner and facilitates the ability of CHP1 to bind microtubules. Interacts with KIF1B (via the C-terminal end of the kinesin-motor domain); the interaction occurs in a calcium-dependent manner. Associates (via C-terminal domain) with microtubules; the association occurs with polymerized microtubules during the cell cycle in a myristoylation- and calcium-independent manner and is enhanced by GAPDH. Interacts with PPP3CA. Interacts with SLC9A1/NHE1 (via the C-terminal domain); the interaction occurs at the plasma membrane in a calcium-dependent manner and at a domain that is critical for growth factor stimulation of the exchanger. Interacts with SLC9A3; increases SLC9A3 trafficking and activity at the plasma membrane. Phosphorylated; decreased phosphorylation is associated with an increase in SLC9A1/NHE1 Na(+)/H(+) exchange activity. Phosphorylation occurs in serum-dependent manner. The phosphorylation state may regulate the binding to SLC9A1/NHE1. In terms of processing, both N-myristoylation and calcium-mediated conformational changes are essential for its function in exocytic traffic. N-myristoylation is required for its association with microtubules and interaction with GAPDH, but not for the constitutive association to membranes. Ubiquitously expressed. Has been found in fetal eye, lung, liver, muscle, heart, kidney, thymus and spleen.

The protein localises to the nucleus. It is found in the cytoplasm. Its subcellular location is the cytoskeleton. It localises to the endomembrane system. The protein resides in the endoplasmic reticulum-Golgi intermediate compartment. The protein localises to the endoplasmic reticulum. It is found in the cell membrane. Its subcellular location is the membrane. Functionally, calcium-binding protein involved in different processes such as regulation of vesicular trafficking, plasma membrane Na(+)/H(+) exchanger and gene transcription. Involved in the constitutive exocytic membrane traffic. Mediates the association between microtubules and membrane-bound organelles of the endoplasmic reticulum and Golgi apparatus and is also required for the targeting and fusion of transcytotic vesicles (TCV) with the plasma membrane. Functions as an integral cofactor in cell pH regulation by controlling plasma membrane-type Na(+)/H(+) exchange activity. Affects the pH sensitivity of SLC9A1/NHE1 by increasing its sensitivity at acidic pH. Required for the stabilization and localization of SLC9A1/NHE1 at the plasma membrane. Inhibits serum- and GTPase-stimulated Na(+)/H(+) exchange. Plays a role as an inhibitor of ribosomal RNA transcription by repressing the nucleolar UBF1 transcriptional activity. May sequester UBF1 in the nucleoplasm and limit its translocation to the nucleolus. Associates to the ribosomal gene promoter. Acts as a negative regulator of the calcineurin/NFAT signaling pathway. Inhibits NFAT nuclear translocation and transcriptional activity by suppressing the calcium-dependent calcineurin phosphatase activity. Also negatively regulates the kinase activity of the apoptosis-induced kinase STK17B. Inhibits both STK17B auto- and substrate-phosphorylations in a calcium-dependent manner. In Homo sapiens (Human), this protein is Calcineurin B homologous protein 1 (CHP1).